Here is a 354-residue protein sequence, read N- to C-terminus: UDP-3-O-acylglucosamine N-acyltransferase (354 aa).

The Proton acceptor role is filled by His-258.

Belongs to the transferase hexapeptide repeat family. LpxD subfamily. As to quaternary structure, homotrimer.

The enzyme catalyses a UDP-3-O-[(3R)-3-hydroxyacyl]-alpha-D-glucosamine + a (3R)-hydroxyacyl-[ACP] = a UDP-2-N,3-O-bis[(3R)-3-hydroxyacyl]-alpha-D-glucosamine + holo-[ACP] + H(+). The protein operates within bacterial outer membrane biogenesis; LPS lipid A biosynthesis. Functionally, catalyzes the N-acylation of UDP-3-O-acylglucosamine using 3-hydroxyacyl-ACP as the acyl donor. Is involved in the biosynthesis of lipid A, a phosphorylated glycolipid that anchors the lipopolysaccharide to the outer membrane of the cell. This is UDP-3-O-acylglucosamine N-acyltransferase from Sinorhizobium medicae (strain WSM419) (Ensifer medicae).